A 426-amino-acid chain; its full sequence is Putative zinc protease AlbF (426 aa).

A Zn(2+)-binding site is contributed by histidine 66. Glutamate 69 (proton acceptor) is an active-site residue. Zn(2+) contacts are provided by histidine 70 and glutamate 142.

The protein belongs to the peptidase M16 family. Requires Zn(2+) as cofactor.

Required for production of the bacteriocin subtilosin. Could catalyze some step in the processing of presubtilosin. The sequence is that of Putative zinc protease AlbF (albF) from Bacillus subtilis (strain 168).